A 351-amino-acid polypeptide reads, in one-letter code: Protein RecA (351 aa).

73-80 provides a ligand contact to ATP; the sequence is GPESSGKT.

This sequence belongs to the RecA family.

The protein localises to the cytoplasm. In terms of biological role, can catalyze the hydrolysis of ATP in the presence of single-stranded DNA, the ATP-dependent uptake of single-stranded DNA by duplex DNA, and the ATP-dependent hybridization of homologous single-stranded DNAs. It interacts with LexA causing its activation and leading to its autocatalytic cleavage. In Herbaspirillum seropedicae, this protein is Protein RecA.